Here is a 146-residue protein sequence, read N- to C-terminus: UPF0260 protein Spea_2441 (146 aa).

Belongs to the UPF0260 family.

In Shewanella pealeana (strain ATCC 700345 / ANG-SQ1), this protein is UPF0260 protein Spea_2441.